The sequence spans 286 residues: Interferon-induced 35 kDa protein (286 aa).

The interval 5-26 is leucine-zipper; it reads LDAALHALQEEQARLKMRLWDL. NID domains are found at residues 81–170 and 183–266; these read ALIT…GDVD and FARD…GEVE.

It belongs to the NMI family. As to quaternary structure, homodimer. Also interacts with BATF. Interacts with TRIM21. Interacts with NMI; the interaction is direct and is facilitated by TRIM21. In terms of processing, phosphorylated. Dephosphorylation correlates with the formation of a complex with NMI. Expressed in a wide range of cell types, including fibroblasts, macrophages, and epithelial cells.

It is found in the cytoplasm. The protein resides in the nucleus. Its subcellular location is the secreted. Functionally, acts as a signaling pathway regulator involved in innate immune system response. In response to interferon IFN-alpha, associates in a complex with signaling pathway regulator NMI to regulate immune response; the complex formation prevents proteasome-mediated degradation of IFI35 and correlates with IFI35 dephosphorylation. In complex with NMI, inhibits virus-triggered type I interferon/IFN-beta production. In complex with NMI, negatively regulates nuclear factor NF-kappa-B signaling by inhibiting the nuclear translocation, activation and transcription of the NF-kappa-B subunit p65/RELA, resulting in the inhibition of endothelial cell proliferation, migration and re-endothelialization of injured arteries. Beside its role as an intracellular signaling pathway regulator, also functions extracellularly as damage-associated molecular patterns (DAMPs) to promote inflammation when actively released by macrophage to the extracellular space during cell injury and pathogen invasion. Macrophage-secreted IFI35 activates NF-kappa-B signaling in adjacent macrophages through Toll-like receptor 4/TLR4 activation, thereby inducing NF-kappa-B translocation from the cytoplasm into the nucleus which promotes the release of pro-inflammatory cytokines. In Homo sapiens (Human), this protein is Interferon-induced 35 kDa protein.